Consider the following 180-residue polypeptide: Transcription repressor NadR (180 aa).

Homodimer.

Its function is as follows. In the presence of nicotinic acid represses transcription of the nadBCA and nifS-nadR operons. Also binds to DNA upstream of the niaP gene, probably regulating it as well. May bind nicotinic acid. The protein is Transcription repressor NadR (nadR) of Bacillus subtilis (strain 168).